Consider the following 150-residue polypeptide: Flagellar assembly factor FliW (150 aa).

The protein belongs to the FliW family. In terms of assembly, interacts with translational regulator CsrA and flagellin(s).

It is found in the cytoplasm. In terms of biological role, acts as an anti-CsrA protein, binds CsrA and prevents it from repressing translation of its target genes, one of which is flagellin. Binds to flagellin and participates in the assembly of the flagellum. The chain is Flagellar assembly factor FliW from Caldanaerobacter subterraneus subsp. tengcongensis (strain DSM 15242 / JCM 11007 / NBRC 100824 / MB4) (Thermoanaerobacter tengcongensis).